The following is a 151-amino-acid chain: SsrA-binding protein (151 aa).

The protein belongs to the SmpB family.

It is found in the cytoplasm. Its function is as follows. Required for rescue of stalled ribosomes mediated by trans-translation. Binds to transfer-messenger RNA (tmRNA), required for stable association of tmRNA with ribosomes. tmRNA and SmpB together mimic tRNA shape, replacing the anticodon stem-loop with SmpB. tmRNA is encoded by the ssrA gene; the 2 termini fold to resemble tRNA(Ala) and it encodes a 'tag peptide', a short internal open reading frame. During trans-translation Ala-aminoacylated tmRNA acts like a tRNA, entering the A-site of stalled ribosomes, displacing the stalled mRNA. The ribosome then switches to translate the ORF on the tmRNA; the nascent peptide is terminated with the 'tag peptide' encoded by the tmRNA and targeted for degradation. The ribosome is freed to recommence translation, which seems to be the essential function of trans-translation. This Wolinella succinogenes (strain ATCC 29543 / DSM 1740 / CCUG 13145 / JCM 31913 / LMG 7466 / NCTC 11488 / FDC 602W) (Vibrio succinogenes) protein is SsrA-binding protein.